Here is a 626-residue protein sequence, read N- to C-terminus: Phosphomethylpyrimidine synthase (626 aa).

Residues Asn-237, Met-266, Tyr-295, His-331, 351 to 353 (SRG), 392 to 395 (DGLR), and Glu-431 each bind substrate. Residue His-435 coordinates Zn(2+). Position 458 (Tyr-458) interacts with substrate. His-499 contacts Zn(2+). The [4Fe-4S] cluster site is built by Cys-579, Cys-582, and Cys-587.

This sequence belongs to the ThiC family. In terms of assembly, homodimer. The cofactor is [4Fe-4S] cluster.

The enzyme catalyses 5-amino-1-(5-phospho-beta-D-ribosyl)imidazole + S-adenosyl-L-methionine = 4-amino-2-methyl-5-(phosphooxymethyl)pyrimidine + CO + 5'-deoxyadenosine + formate + L-methionine + 3 H(+). It functions in the pathway cofactor biosynthesis; thiamine diphosphate biosynthesis. Functionally, catalyzes the synthesis of the hydroxymethylpyrimidine phosphate (HMP-P) moiety of thiamine from aminoimidazole ribotide (AIR) in a radical S-adenosyl-L-methionine (SAM)-dependent reaction. In Cupriavidus necator (strain ATCC 17699 / DSM 428 / KCTC 22496 / NCIMB 10442 / H16 / Stanier 337) (Ralstonia eutropha), this protein is Phosphomethylpyrimidine synthase.